Here is a 606-residue protein sequence, read N- to C-terminus: UvrABC system protein C (606 aa).

A GIY-YIG domain is found at 18-96 (SQPGVYRMMN…IKSLNPRYNI (79 aa)). One can recognise a UVR domain in the interval 205–240 (TEVLKSITRKMHEAAEEQEYEQAALFRDQIQSLRKI).

This sequence belongs to the UvrC family. As to quaternary structure, interacts with UvrB in an incision complex.

It localises to the cytoplasm. The UvrABC repair system catalyzes the recognition and processing of DNA lesions. UvrC both incises the 5' and 3' sides of the lesion. The N-terminal half is responsible for the 3' incision and the C-terminal half is responsible for the 5' incision. The protein is UvrABC system protein C of Nitrosospira multiformis (strain ATCC 25196 / NCIMB 11849 / C 71).